Reading from the N-terminus, the 508-residue chain is Protein FAM217A (508 aa).

Belongs to the FAM217 family.

The chain is Protein FAM217A (FAM217A) from Homo sapiens (Human).